The sequence spans 195 residues: Imidazoleglycerol-phosphate dehydratase (195 aa).

The protein belongs to the imidazoleglycerol-phosphate dehydratase family.

Its subcellular location is the cytoplasm. It catalyses the reaction D-erythro-1-(imidazol-4-yl)glycerol 3-phosphate = 3-(imidazol-4-yl)-2-oxopropyl phosphate + H2O. It participates in amino-acid biosynthesis; L-histidine biosynthesis; L-histidine from 5-phospho-alpha-D-ribose 1-diphosphate: step 6/9. The sequence is that of Imidazoleglycerol-phosphate dehydratase from Burkholderia mallei (strain NCTC 10247).